A 162-amino-acid polypeptide reads, in one-letter code: Ribonuclease P protein component (162 aa).

A disordered region spans residues 1–62 (MDEKDLATQP…GPPKAGGRLL (62 aa)). Positions 21–36 (GPHEDPRRQERAEAQA) are enriched in basic and acidic residues.

This sequence belongs to the RnpA family. Consists of a catalytic RNA component (M1 or rnpB) and a protein subunit.

It carries out the reaction Endonucleolytic cleavage of RNA, removing 5'-extranucleotides from tRNA precursor.. RNaseP catalyzes the removal of the 5'-leader sequence from pre-tRNA to produce the mature 5'-terminus. It can also cleave other RNA substrates such as 4.5S RNA. The protein component plays an auxiliary but essential role in vivo by binding to the 5'-leader sequence and broadening the substrate specificity of the ribozyme. The sequence is that of Ribonuclease P protein component from Thermus aquaticus.